A 440-amino-acid chain; its full sequence is Xylose isomerase (440 aa).

Residues His-101 and Asp-104 contribute to the active site. Glu-232, Glu-268, His-271, Asp-296, Asp-307, Asp-309, and Asp-339 together coordinate Mg(2+).

This sequence belongs to the xylose isomerase family. In terms of assembly, homotetramer. It depends on Mg(2+) as a cofactor.

The protein localises to the cytoplasm. It catalyses the reaction alpha-D-xylose = alpha-D-xylulofuranose. This is Xylose isomerase from Escherichia coli O157:H7.